A 707-amino-acid chain; its full sequence is Prolyl endopeptidase-like (707 aa).

Residues serine 538, aspartate 624, and histidine 670 each act as charge relay system in the active site.

Belongs to the peptidase S9A family. Homodimer.

The protein localises to the cytoplasm. Its subcellular location is the cytosol. Serine peptidase whose precise substrate specificity remains unclear. Does not cleave peptides after a arginine or lysine residue. Regulates trans-Golgi network morphology and sorting by regulating the membrane binding of the AP-1 complex. May play a role in the regulation of synaptic vesicle exocytosis. The polypeptide is Prolyl endopeptidase-like (prepl) (Xenopus laevis (African clawed frog)).